An 88-amino-acid chain; its full sequence is Kunitz-type kappaPI-theraphotoxin-Hs1c (88 aa).

The first 27 residues, 1–27, serve as a signal peptide directing secretion; the sequence is MGIARILSAVLFLSVLFVVTFPALLSA. Positions 28–33 are excised as a propeptide; that stretch reads DHHDGR. Residues 37-85 enclose the BPTI/Kunitz inhibitor domain; the sequence is CRLPSDRGRCKASFECWYFNGRTCAKFIYGGCGGNGNKFPTQEACMKRC. 3 disulfides stabilise this stretch: Cys37/Cys85, Cys46/Cys68, and Cys60/Cys81.

The protein belongs to the venom Kunitz-type family. 02 (native) subfamily. In terms of tissue distribution, expressed by the venom gland.

Its subcellular location is the secreted. Functionally, serine protease inhibitor that inhibits trypsin (Ki=0.281 nM), kallikrein (Ki=337 nM), and chymotrypsin. The polypeptide is Kunitz-type kappaPI-theraphotoxin-Hs1c (Cyriopagopus schmidti (Chinese bird spider)).